The following is a 65-amino-acid chain: Large ribosomal subunit protein bL35 (65 aa).

This sequence belongs to the bacterial ribosomal protein bL35 family.

The polypeptide is Large ribosomal subunit protein bL35 (Borrelia turicatae (strain 91E135)).